A 54-amino-acid chain; its full sequence is MKMLTHTCFYCSFSFFTRKFDVFGAITKKDTPVVFCPACGNQSLTVSHIEEEIG.

This sequence belongs to the phi29likevirus gp16.6 family.

This is Gene product 16.6 (16.6) from Bacillus phage PZA (Bacteriophage PZA).